The sequence spans 256 residues: DNA polymerase sliding clamp 2 (256 aa).

Belongs to the PCNA family. Homotrimer. The subunits circularize to form a toroid; DNA passes through its center. Replication factor C (RFC) is required to load the toroid on the DNA.

Functionally, sliding clamp subunit that acts as a moving platform for DNA processing. Responsible for tethering the catalytic subunit of DNA polymerase and other proteins to DNA during high-speed replication. The chain is DNA polymerase sliding clamp 2 from Pyrobaculum aerophilum (strain ATCC 51768 / DSM 7523 / JCM 9630 / CIP 104966 / NBRC 100827 / IM2).